The chain runs to 250 residues: 4-hydroxy-tetrahydrodipicolinate reductase (250 aa).

Residues 10–15 (GAKGRI), 78–80 (GTT), and 105–108 (APNF) each bind NAD(+). The active-site Proton donor/acceptor is His-135. Residue His-136 participates in (S)-2,3,4,5-tetrahydrodipicolinate binding. The active-site Proton donor is the Lys-139. 145–146 (GT) lines the (S)-2,3,4,5-tetrahydrodipicolinate pocket.

It belongs to the DapB family.

Its subcellular location is the cytoplasm. The enzyme catalyses (S)-2,3,4,5-tetrahydrodipicolinate + NAD(+) + H2O = (2S,4S)-4-hydroxy-2,3,4,5-tetrahydrodipicolinate + NADH + H(+). It carries out the reaction (S)-2,3,4,5-tetrahydrodipicolinate + NADP(+) + H2O = (2S,4S)-4-hydroxy-2,3,4,5-tetrahydrodipicolinate + NADPH + H(+). The protein operates within amino-acid biosynthesis; L-lysine biosynthesis via DAP pathway; (S)-tetrahydrodipicolinate from L-aspartate: step 4/4. In terms of biological role, catalyzes the conversion of 4-hydroxy-tetrahydrodipicolinate (HTPA) to tetrahydrodipicolinate. In Streptomyces coelicolor (strain ATCC BAA-471 / A3(2) / M145), this protein is 4-hydroxy-tetrahydrodipicolinate reductase.